We begin with the raw amino-acid sequence, 190 residues long: Putative 3-methyladenine DNA glycosylase (190 aa).

It belongs to the DNA glycosylase MPG family.

The protein is Putative 3-methyladenine DNA glycosylase of Corynebacterium efficiens (strain DSM 44549 / YS-314 / AJ 12310 / JCM 11189 / NBRC 100395).